The following is a 322-amino-acid chain: F-actin-capping protein subunit beta (322 aa).

The protein belongs to the F-actin-capping protein beta subunit family. As to quaternary structure, component of the F-actin capping complex, composed of a heterodimer of an alpha and a beta subunit.

It is found in the cytoplasm. The protein resides in the cytoskeleton. Its subcellular location is the actin patch. F-actin-capping proteins bind in a Ca(2+)-independent manner to the fast growing ends of actin filaments (barbed end) thereby blocking the exchange of subunits at these ends. Unlike other capping proteins (such as gelsolin and severin), these proteins do not sever actin filaments. This is F-actin-capping protein subunit beta (cap2) from Aspergillus fumigatus (strain ATCC MYA-4609 / CBS 101355 / FGSC A1100 / Af293) (Neosartorya fumigata).